The chain runs to 107 residues: uncharacterized protein (107 aa).

Positions 86–107 (QVSNHEEDADVLETQDDNAEQV) are disordered. The segment covering 92 to 107 (EDADVLETQDDNAEQV) has biased composition (acidic residues).

This is an uncharacterized protein from Rickettsia prowazekii (strain Madrid E).